Consider the following 545-residue polypeptide: T-complex protein 1 subunit gamma (545 aa).

Met1 is subject to N-acetylmethionine. The segment at 1 to 24 is disordered; it reads MMGHRPVLVLSQNTKRESGRKVQS. Ser11 bears the Phosphoserine mark. Residue Lys15 forms a Glycyl lysine isopeptide (Lys-Gly) (interchain with G-Cter in SUMO2) linkage. Residue Gly42 participates in ADP binding. Gly42 is a binding site for ATP. Position 93 (Asp93) interacts with Mg(2+). Residues Gly94, Thr95, Thr96, Ser97, Thr162, and Lys163 each contribute to the ADP site. Residues Gly94, Thr95, and Thr96 each coordinate ATP. Ser170 carries the post-translational modification Phosphoserine. Lys222 bears the N6-acetyllysine mark. Phosphoserine occurs at positions 243 and 244. The residue at position 247 (Tyr247) is a Phosphotyrosine. Glycyl lysine isopeptide (Lys-Gly) (interchain with G-Cter in SUMO2) cross-links involve residues Lys248 and Lys249. Ser252 bears the Phosphoserine mark. Cys366 and Cys372 are disulfide-bonded. Lys381 participates in a covalent cross-link: Glycyl lysine isopeptide (Lys-Gly) (interchain with G-Cter in SUMO2). Gly411 contributes to the ADP binding site. An ATP-binding site is contributed by Gly411. A phosphothreonine mark is found at Thr430 and Thr459. Residues Gly482, Glu483, Glu497, and Lys502 each contribute to the ADP site. Gly482 is an ATP binding site. Glu497 contacts ATP. Residues 526–545 are disordered; sequence HKKKGDDQNRQTGAPDAGQE.

It belongs to the TCP-1 chaperonin family. Component of the chaperonin-containing T-complex (TRiC), a hexadecamer composed of two identical back-to-back stacked rings enclosing a protein folding chamber. Each ring is made up of eight different subunits: TCP1/CCT1, CCT2, CCT3, CCT4, CCT5, CCT6A/CCT6, CCT7, CCT8. Interacts with PACRG. Interacts with DNAAF4. Interacts with DLEC1. Post-translationally, the N-terminus is blocked.

It is found in the cytoplasm. It catalyses the reaction ATP + H2O = ADP + phosphate + H(+). Component of the chaperonin-containing T-complex (TRiC), a molecular chaperone complex that assists the folding of actin, tubulin and other proteins upon ATP hydrolysis. The TRiC complex mediates the folding of WRAP53/TCAB1, thereby regulating telomere maintenance. As part of the TRiC complex may play a role in the assembly of BBSome, a complex involved in ciliogenesis regulating transports vesicles to the cilia. The protein is T-complex protein 1 subunit gamma (Cct3) of Mus musculus (Mouse).